The following is a 554-amino-acid chain: MFCIQCEQTIRTPAGNGCSYAQGMCGKLAATSDLQDLLIYMLQGVSVYAVKARELGVVDTEVDTFVPKAFFSTLTNVNFDDERIIAYAKQAAQYRESLKNAYEATCEQSGKTAEQMPPVAQLVLGTSKLEMLSQAPISLLNKDKNNIHEDILGLRLLCLYGLKGAAAYMEHARVLGKTDVDIAADFHRIMAFLGEPSVDADKLFSTAMEIGQLNYRIMALLDAGETEAFGHPEPTVVNTKPVKGKAILVSGHDMKDLELILEQTAGKGINVYTHGEMLPALAYPAFKKYPHLVGNYGSAWQNQQKEFANFPGAVVMTSNCIIDPNVGQYSDRIFTRSIVGWPGVVHVTGDDFSVVIEKALSNDGFHYDEIPHNITIGFARNALMAAAPTVVENVKNGSIKHFFLVGGCDGDKSERSYFTDLAKSAPKDSIILTLGCGKYKFNKLEFGDINGIPRLLDIGQCNDAYSAIQLAIALSQIFECDINELPLNLVLSWFEQKAIVVLLTLLSLGVKNIRTGPTPPAFLTANLAKILEDKFGLRNTTTVEADLKTMLNVA.

[2Fe-2S] cluster-binding residues include Cys-3, Cys-6, Cys-18, and Cys-25. His-252, Glu-276, Cys-320, Cys-408, Cys-436, Cys-461, Glu-495, and Lys-497 together coordinate hybrid [4Fe-2O-2S] cluster. Cys-408 is subject to Cysteine persulfide.

It belongs to the HCP family. The cofactor is [2Fe-2S] cluster. Hybrid [4Fe-2O-2S] cluster serves as cofactor.

It is found in the cytoplasm. The catalysed reaction is A + NH4(+) + H2O = hydroxylamine + AH2 + H(+). Its function is as follows. Catalyzes the reduction of hydroxylamine to form NH(3) and H(2)O. The protein is Hydroxylamine reductase of Shewanella oneidensis (strain ATCC 700550 / JCM 31522 / CIP 106686 / LMG 19005 / NCIMB 14063 / MR-1).